The sequence spans 283 residues: Pre-protein-C8 (283 aa).

A signal peptide (tat-type signal) is located at residues 1-40; it reads MKEDNNTSEESGRINRRNVLKTVGAAGLFAAGSTGMAAAA. A helix-loop-helix (HLH) region region spans residues 61-75; the sequence is ARELAKTPAFRELAQ.

In terms of assembly, immunity protein HalI interacts with Halocin-C8; the interaction is direct. Post-translationally, predicted to be exported by the Tat system. The position of the signal peptide cleavage has not been experimentally proven.

The protein localises to the secreted. Its subcellular location is the cell membrane. Functionally, has antibacterial activity against a wide variety of haloarchaeons. Causes cell lysis and death, possibly by disrupting the cell wall. In terms of biological role, acts as an immunity protein for halocin-C8. Able to block the halocin-C8 activity by sequestering the activity of halocin-C8 through specific and direct binding. The polypeptide is Pre-protein-C8 (proC8) (Halobacterium sp. (strain AS7092)).